The primary structure comprises 96 residues: MNIRPLHDRVIVKRSEVESKSAGGIVLTGSAAEQSSRGEVLAVGNGRILENGSVQPLDVKVGDIVIFNEGYGVKKEKIDGEEVLILSESDLMAVVS.

This sequence belongs to the GroES chaperonin family. In terms of assembly, heptamer of 7 subunits arranged in a ring. Interacts with the chaperonin GroEL.

It is found in the cytoplasm. Together with the chaperonin GroEL, plays an essential role in assisting protein folding. The GroEL-GroES system forms a nano-cage that allows encapsulation of the non-native substrate proteins and provides a physical environment optimized to promote and accelerate protein folding. GroES binds to the apical surface of the GroEL ring, thereby capping the opening of the GroEL channel. In Shewanella sediminis (strain HAW-EB3), this protein is Co-chaperonin GroES.